We begin with the raw amino-acid sequence, 270 residues long: Sulfur carrier protein FdhD (270 aa).

The active-site Cysteine persulfide intermediate is cysteine 116. 253–258 (FAREGK) is a Mo-bis(molybdopterin guanine dinucleotide) binding site.

It belongs to the FdhD family.

It is found in the cytoplasm. Its function is as follows. Required for formate dehydrogenase (FDH) activity. Acts as a sulfur carrier protein that transfers sulfur from IscS to the molybdenum cofactor prior to its insertion into FDH. This chain is Sulfur carrier protein FdhD, found in Haemophilus influenzae (strain ATCC 51907 / DSM 11121 / KW20 / Rd).